The following is a 556-amino-acid chain: MSTTEPAAPVAPLDITATEEWAALTTHLREISEVSLRDLFAADPRRGETFAAEADGLYLDYSKNRLTARTVELLTALARRAGLADRIEAMFRGERINVTENRPVLHVALRAPAGTRIEVDGVDVVPDVHRVLDAMSQFADRVRSGDWLGATGERIRTVVNIGIGGSDLGPAMAYDALRDYADRSIEVRFVSNVDPTDIWEATADLDPASTLFIVSSKTFTTLETISNARAARSWLTGLLGEDAVSRHFVAVSTNAEKVAEFGIDTVNMFEFWDWVGGRYSVDCAIGLSLMIAIGPPNFREFLAGFAAMDTHFRTAPFERNLPVLLGLIGLWYRDFFGTATHAVLPYSHYLGRFPAYLQQLDMESNGKSVDLTGRPVSTPTGPIVWGTPGTNGQHAYYQLLHQGTTIVPADFIGFVRPNHPGVGTADGAGVDQHALLLANFLAQTEALAFGRTAAEVAAEGVTPDLVAHRTFPGNRPSNTLLAQKLTPFALGQLIALYEHKVFTQGVIWGINSFDQWGVELGKVLAGRIIPELGSEQEPELGHDSSTNALIKRLRAG.

The Proton donor role is filled by glutamate 363. Catalysis depends on residues histidine 394 and lysine 522.

This sequence belongs to the GPI family.

It is found in the cytoplasm. It catalyses the reaction alpha-D-glucose 6-phosphate = beta-D-fructose 6-phosphate. It participates in carbohydrate biosynthesis; gluconeogenesis. Its pathway is carbohydrate degradation; glycolysis; D-glyceraldehyde 3-phosphate and glycerone phosphate from D-glucose: step 2/4. Its function is as follows. Catalyzes the reversible isomerization of glucose-6-phosphate to fructose-6-phosphate. The polypeptide is Glucose-6-phosphate isomerase (Frankia casuarinae (strain DSM 45818 / CECT 9043 / HFP020203 / CcI3)).